The primary structure comprises 579 residues: Plastidial pyruvate kinase 2 (579 aa).

Residues 1-63 constitute a chloroplast transit peptide; it reads MAQVVATRSI…SRRVVDTTVR (63 aa). Polar residues predominate over residues 6 to 24; it reads ATRSIQGSMLSPNGGSVST. Positions 6-26 are disordered; it reads ATRSIQGSMLSPNGGSVSTRS. Residue arginine 140 coordinates substrate. 4 residues coordinate K(+): asparagine 142, serine 144, aspartate 175, and threonine 176. 142–145 lines the ATP pocket; it reads NMSH. An ATP-binding site is contributed by arginine 182. Residue lysine 325 participates in substrate binding. Glutamate 327 contributes to the Mg(2+) binding site. Glycine 350, aspartate 351, and threonine 383 together coordinate substrate. Mg(2+) is bound at residue aspartate 351.

The protein belongs to the pyruvate kinase family. In terms of assembly, oligomer of alpha and beta subunits. Mg(2+) serves as cofactor. The cofactor is K(+). As to expression, mostly expressed in seeds, and, to a lower extent, in roots, leaves (veins and trichomes), inflorescences, siliques, pollen (grains and tubes) and flowers (sepals and petals).

It localises to the plastid. The protein localises to the chloroplast stroma. Its subcellular location is the mitochondrion. It catalyses the reaction pyruvate + ATP = phosphoenolpyruvate + ADP + H(+). It functions in the pathway carbohydrate degradation; glycolysis; pyruvate from D-glyceraldehyde 3-phosphate: step 5/5. Required for plastidial pyruvate kinase activity. Involved in seed oil accumulation, embryo development and seed storage compounds mobilization upon germination. The protein is Plastidial pyruvate kinase 2 (PKP2) of Arabidopsis thaliana (Mouse-ear cress).